A 635-amino-acid polypeptide reads, in one-letter code: Frizzled and smoothened-like protein C (635 aa).

Residues 1–20 form the signal peptide; sequence MKFKLIIFIIIIYIIKILKS. The Extracellular portion of the chain corresponds to 21 to 244; it reads EILNEFGYGL…NKWVQMYKMS (224 aa). In terms of domain architecture, FZ spans 32–166; sequence DENLKCLSFI…LTKYGYTENN (135 aa). 2 disulfides stabilise this stretch: cysteine 37/cysteine 108 and cysteine 50/cysteine 101. N-linked (GlcNAc...) asparagine glycosylation is found at asparagine 65, asparagine 141, asparagine 156, asparagine 185, and asparagine 203. The helical transmembrane segment at 245–265 threads the bilayer; it reads IVLSTLSFICSIYNIITFGLL. The Cytoplasmic segment spans residues 266-275; the sequence is SKLKSKYNLC. A helical transmembrane segment spans residues 276 to 296; it reads ITFFSVSTVLMSLMDIVTYGI. Residues 297 to 314 lie on the Extracellular side of the membrane; sequence GYEELLCPESGRYAIQSD. The helical transmembrane segment at 315 to 335 threads the bilayer; that stretch reads VACGVTGAFFHIGITTGVLWW. Residues 336-356 lie on the Cytoplasmic side of the membrane; the sequence is TTMSICLYSEVKRFKMISFRY. A helical membrane pass occupies residues 357 to 377; the sequence is IIIFNSVISLILLIIPLSGQA. At 378-398 the chain is on the extracellular side; the sequence is FMSGNGSLGCWIRKTWYANGT. N-linked (GlcNAc...) asparagine glycans are attached at residues asparagine 382 and asparagine 396. The helical transmembrane segment at 399–419 threads the bilayer; the sequence is FWIPCGISLFIGAICIVLVIY. At 420–440 the chain is on the cytoplasmic side; it reads EIFKISRNLSKDNKPLMFQIR. A helical membrane pass occupies residues 441–461; sequence PFLCVLLVGGSFLYLFIFYFN. Residues 462-496 lie on the Extracellular side of the membrane; the sequence is NERNLDKYKAAIPSYVQCLLSSDENGEDCLTDGPG. Residues 497–517 form a helical membrane-spanning segment; it reads FGAYFTFYFFTRLFGITSFSI. Residues 518–635 are Cytoplasmic-facing; it reads YGTSKIARDI…SSKDSNTNSF (118 aa). The segment covering 559–594 has biased composition (polar residues); it reads SISGSNQKRFNRNGSNFNMKQNKSNPNDSISLSVVE. Residues 559–635 are disordered; sequence SISGSNQKRF…SSKDSNTNSF (77 aa). Residues 594–623 are a coiled coil; it reads ESTKKQDTENELESNIETKENRSTDISIEN. Residues 623–635 are compositionally biased toward low complexity; that stretch reads NTTSSKDSNTNSF.

The protein belongs to the G-protein coupled receptor Fz/Smo family.

The protein resides in the membrane. In Dictyostelium discoideum (Social amoeba), this protein is Frizzled and smoothened-like protein C (fslC).